The chain runs to 137 residues: Basic phospholipase A2 DsM-S1 (137 aa).

A signal peptide spans 1–16 (MRTLWIVAVCLIGVEG). 7 cysteine pairs are disulfide-bonded: Cys42–Cys131, Cys44–Cys60, Cys59–Cys111, Cys65–Cys137, Cys66–Cys104, Cys73–Cys97, and Cys91–Cys102. 3 residues coordinate Ca(2+): Tyr43, Gly45, and Gly47. The active site involves His63. Asp64 lines the Ca(2+) pocket. The active site involves Asp105.

The protein belongs to the phospholipase A2 family. Group II subfamily. D49 sub-subfamily. The cofactor is Ca(2+). In terms of tissue distribution, expressed by the venom gland.

It localises to the secreted. The enzyme catalyses a 1,2-diacyl-sn-glycero-3-phosphocholine + H2O = a 1-acyl-sn-glycero-3-phosphocholine + a fatty acid + H(+). Snake venom phospholipase A2 (PLA2) that is neurotoxic. PLA2 catalyzes the calcium-dependent hydrolysis of the 2-acyl groups in 3-sn-phosphoglycerides. The protein is Basic phospholipase A2 DsM-S1 of Daboia siamensis (Eastern Russel's viper).